Here is a 33-residue protein sequence, read N- to C-terminus: Dermonecrotic toxin LbSicTox-alphaIB1b (33 aa).

His11 is a catalytic residue. Mg(2+)-binding residues include Glu31 and Asp33.

It belongs to the arthropod phospholipase D family. Class II subfamily. Mg(2+) is required as a cofactor. In terms of processing, contains 2 disulfide bonds. In terms of tissue distribution, expressed by the venom gland.

The protein localises to the secreted. The catalysed reaction is an N-(acyl)-sphingosylphosphocholine = an N-(acyl)-sphingosyl-1,3-cyclic phosphate + choline. It catalyses the reaction an N-(acyl)-sphingosylphosphoethanolamine = an N-(acyl)-sphingosyl-1,3-cyclic phosphate + ethanolamine. It carries out the reaction a 1-acyl-sn-glycero-3-phosphocholine = a 1-acyl-sn-glycero-2,3-cyclic phosphate + choline. The enzyme catalyses a 1-acyl-sn-glycero-3-phosphoethanolamine = a 1-acyl-sn-glycero-2,3-cyclic phosphate + ethanolamine. In terms of biological role, dermonecrotic toxins cleave the phosphodiester linkage between the phosphate and headgroup of certain phospholipids (sphingolipid and lysolipid substrates), forming an alcohol (often choline) and a cyclic phosphate. This toxin acts on sphingomyelin (SM) with high activity (9.5 U/mg). It may also act on ceramide phosphoethanolamine (CPE), lysophosphatidylcholine (LPC) and lysophosphatidylethanolamine (LPE), but not on lysophosphatidylserine (LPS), and lysophosphatidylglycerol (LPG). It acts by transphosphatidylation, releasing exclusively cyclic phosphate products as second products. Induces dermonecrosis, hemolysis, increased vascular permeability, edema, inflammatory response, and platelet aggregation. This is Dermonecrotic toxin LbSicTox-alphaIB1b from Loxosceles boneti (North American fiddleback spider).